A 667-amino-acid polypeptide reads, in one-letter code: Probable potassium transport system protein Kup (667 aa).

A run of 12 helical transmembrane segments spans residues 16 to 36 (GFII…LYTM), 58 to 78 (VSLI…LIAL), 101 to 121 (WLII…ALTP), 146 to 166 (TNVI…QRFG), 167 to 187 (TGVI…VLGI), 221 to 241 (IFIL…YSDL), 253 to 273 (WPFV…WILA), 294 to 314 (VYLV…LISG), 343 to 363 (LYIP…VLYF), 373 to 393 (YGLA…YYLI), 399 to 419 (PLLA…FFLA), and 431 to 451 (VVVL…GTVI).

Belongs to the HAK/KUP transporter (TC 2.A.72) family.

The protein localises to the cell membrane. The catalysed reaction is K(+)(in) + H(+)(in) = K(+)(out) + H(+)(out). In terms of biological role, transport of potassium into the cell. Likely operates as a K(+):H(+) symporter. In Streptococcus equi subsp. zooepidemicus (strain MGCS10565), this protein is Probable potassium transport system protein Kup.